Here is a 276-residue protein sequence, read N- to C-terminus: NH(3)-dependent NAD(+) synthetase (276 aa).

43–50 is an ATP binding site; sequence GISGGVDS. D49 is a Mg(2+) binding site. Position 146 (R146) interacts with deamido-NAD(+). T166 serves as a coordination point for ATP. E171 serves as a coordination point for Mg(2+). The deamido-NAD(+) site is built by K179 and D186. Positions 195 and 217 each coordinate ATP. 266 to 267 provides a ligand contact to deamido-NAD(+); sequence HK.

It belongs to the NAD synthetase family. In terms of assembly, homodimer.

The catalysed reaction is deamido-NAD(+) + NH4(+) + ATP = AMP + diphosphate + NAD(+) + H(+). It functions in the pathway cofactor biosynthesis; NAD(+) biosynthesis; NAD(+) from deamido-NAD(+) (ammonia route): step 1/1. Catalyzes the ATP-dependent amidation of deamido-NAD to form NAD. Uses ammonia as a nitrogen source. The chain is NH(3)-dependent NAD(+) synthetase from Vibrio cholerae serotype O1 (strain ATCC 39541 / Classical Ogawa 395 / O395).